The following is a 365-amino-acid chain: MWPLSHRHLCLAFLLVCVLSAISFFLHIYQDSIRHGLGLSILCPDRLVTAPVAIFCLPDTPMSPNTSSPCPQHPASLSGTWTIYPDGRFGNQMGQYATLLALAQLNGRRAFILPAMHATLAPVFRITLPVLAPEVDSSTPWRELQLHDWMSEEYADLGDPFLKLSGFPCSWTFFHHLREQIRSEFTLHDHLREEAQSVLRRLRLGRSGDRPRTFVGVHVRRGDYLQVMPQRWKGVVGSSAYLREAMDWFRARHEAPVFVVTSNGMEWCRENIDASKGDVMFAGDGQEASPWKDFALLTQCNHTIMTIGTFGFWAAYLAGGDTVYLANFTLPDSEFLKIFKPEAAFLPEWVGINADLSSLWTLAEP.

Residues 1–8 (MWPLSHRH) are Cytoplasmic-facing. The chain crosses the membrane as a helical; Signal-anchor for type II membrane protein span at residues 9-25 (LCLAFLLVCVLSAISFF). The Lumenal portion of the chain corresponds to 26 to 365 (LHIYQDSIRH…LSSLWTLAEP (340 aa)). 3 N-linked (GlcNAc...) asparagine glycosylation sites follow: Asn65, Asn301, and Asn327.

This sequence belongs to the glycosyltransferase 11 family.

The protein localises to the golgi apparatus. It localises to the golgi stack membrane. It carries out the reaction a beta-D-galactosyl-(1-&gt;4)-N-acetyl-beta-D-glucosaminyl derivative + GDP-beta-L-fucose = an alpha-L-Fuc-(1-&gt;2)-beta-D-Gal-(1-&gt;4)-beta-D-GlcNAc derivative + GDP + H(+). It catalyses the reaction a ganglioside GA1 + GDP-beta-L-fucose = a ganglioside Fuc-GA1 + GDP + H(+). The enzyme catalyses a beta-D-Gal-(1-&gt;3)-beta-D-GlcNAc-(1-&gt;3)-beta-D-Gal-(1-&gt;4)-beta-D-Glc-(1&lt;-&gt;1')-Cer(d18:1(4E)) + GDP-beta-L-fucose = alpha-L-fucosyl-(1-&gt;2)- beta-D-galactosyl-(1-&gt;3)-N-acetyl-beta-D-glucosaminyl-(1-&gt;3)-beta-D-galactosyl-(1-&gt;4)-beta-D-glucosyl-(1&lt;-&gt;1')-N-acylsphing-4-enine + GDP + H(+). The catalysed reaction is a neolactoside nLc4Cer(d18:1(4E)) + GDP-beta-L-fucose = a neolactoside IV(2)-alpha-Fuc-nLc4Cer(d18:1(4E)) + GDP + H(+). It carries out the reaction a ganglioside GM1 + GDP-beta-L-fucose = a ganglioside Fuc-GM1 + GDP + H(+). It catalyses the reaction beta-D-galactosyl-(1-&gt;3)-N-acetyl-D-galactosamine + GDP-beta-L-fucose = alpha-L-fucosyl-(1-&gt;2)-beta-D-galactosyl-(1-&gt;3)-N-acetyl-D-galactosamine + GDP + H(+). Its pathway is protein modification; protein glycosylation. Its function is as follows. Catalyzes the transfer of L-fucose, from a guanosine diphosphate-beta-L-fucose, to the terminal galactose residue of glycoconjugates through an alpha(1,2) linkage leading to H antigen synthesis that is an intermediate substrate in the synthesis of ABO blood group antigens. H antigen is essential for maturation of the glomerular layer of the main olfactory bulb, in cell migration and early cell-cell contacts during tumor associated angiogenesis. Preferentially fucosylates soluble lactose and to a lesser extent fucosylates glycolipids gangliosides GA1 and GM1a. In Leontocebus fuscicollis (Brown-mantled tamarin), this protein is Galactoside alpha-(1,2)-fucosyltransferase 1.